We begin with the raw amino-acid sequence, 181 residues long: ATP-dependent protease subunit HslV (181 aa).

T6 is a catalytic residue. Na(+) contacts are provided by G162, C165, and T168.

The protein belongs to the peptidase T1B family. HslV subfamily. In terms of assembly, a double ring-shaped homohexamer of HslV is capped on each side by a ring-shaped HslU homohexamer. The assembly of the HslU/HslV complex is dependent on binding of ATP.

It localises to the cytoplasm. The enzyme catalyses ATP-dependent cleavage of peptide bonds with broad specificity.. Allosterically activated by HslU binding. Its function is as follows. Protease subunit of a proteasome-like degradation complex believed to be a general protein degrading machinery. The polypeptide is ATP-dependent protease subunit HslV (Nitratidesulfovibrio vulgaris (strain ATCC 29579 / DSM 644 / CCUG 34227 / NCIMB 8303 / VKM B-1760 / Hildenborough) (Desulfovibrio vulgaris)).